Reading from the N-terminus, the 238-residue chain is Uridylate kinase (238 aa).

Residue 12–15 (KLSG) participates in ATP binding. Position 54 (Gly54) interacts with UMP. ATP contacts are provided by Gly55 and Arg59. Residues Asp74 and 135–142 (TGNPFFTT) each bind UMP. Positions 162, 168, and 171 each coordinate ATP.

The protein belongs to the UMP kinase family. As to quaternary structure, homohexamer.

It localises to the cytoplasm. The catalysed reaction is UMP + ATP = UDP + ADP. The protein operates within pyrimidine metabolism; CTP biosynthesis via de novo pathway; UDP from UMP (UMPK route): step 1/1. Its activity is regulated as follows. Inhibited by UTP. Catalyzes the reversible phosphorylation of UMP to UDP. The protein is Uridylate kinase of Janthinobacterium sp. (strain Marseille) (Minibacterium massiliensis).